A 232-amino-acid chain; its full sequence is Ribonuclease 3 (232 aa).

Positions 6–133 constitute an RNase III domain; that stretch reads FNDIENRLGV…VIAAVYLDKG (128 aa). E46 lines the Mg(2+) pocket. Residue D50 is part of the active site. Residues D119 and E122 each coordinate Mg(2+). The active site involves E122. The region spanning 160–229 is the DRBM domain; the sequence is DFKTKLQELL…AKEALKRLEK (70 aa).

It belongs to the ribonuclease III family. Homodimer. Mg(2+) serves as cofactor.

It is found in the cytoplasm. It catalyses the reaction Endonucleolytic cleavage to 5'-phosphomonoester.. Its function is as follows. Digests double-stranded RNA. Involved in the processing of primary rRNA transcript to yield the immediate precursors to the large and small rRNAs (23S and 16S). Processes some mRNAs, and tRNAs when they are encoded in the rRNA operon. Processes pre-crRNA and tracrRNA of type II CRISPR loci if present in the organism. The protein is Ribonuclease 3 of Clostridium botulinum (strain Eklund 17B / Type B).